A 295-amino-acid chain; its full sequence is Adrenocorticotropic hormone receptor (295 aa).

The Extracellular segment spans residues 1–23; that stretch reads MRHILNLYENINSTARNNSDCPA. N-linked (GlcNAc...) asparagine glycosylation is found at Asn-12 and Asn-17. 2 disulfide bridges follow: Cys-21-Cys-253 and Cys-245-Cys-251. Residues 24 to 49 traverse the membrane as a helical segment; that stretch reads VILPEEIFFTVSIVGVLENLMVLLAV. The Cytoplasmic segment spans residues 50–58; that stretch reads AKNKSLQSP. A helical membrane pass occupies residues 59-79; sequence MYFFICSLAISDMLGSLYKIL. Residues 80–104 are Extracellular-facing; it reads ENVLIMFRNMGYLEPRGSFESTADD. A helical transmembrane segment spans residues 105–126; it reads VVDSLFILSLLGSICSLSVIAA. Over 127-147 the chain is Cytoplasmic; the sequence is DRYITIFHALQYHSIVTMHRA. A helical membrane pass occupies residues 148–168; it reads LVVLTVLWAGCTGSGITIVTF. Over 169–180 the chain is Extracellular; it reads SHHVPTVIAFTA. Residues 181–199 traverse the membrane as a helical segment; that stretch reads LFPLMLAFILCLYVHMFLL. The Cytoplasmic portion of the chain corresponds to 200-217; the sequence is ARSHARRTSSLPKANMRG. The chain crosses the membrane as a helical span at residues 218-244; that stretch reads AITLTVLLGVFIFCWAPFVLHVLLMTF. At 245–256 the chain is on the extracellular side; it reads CPADPYCACYMS. A helical membrane pass occupies residues 257 to 278; sequence LFQVNGVLIMCNAVIDPFIYAF. The Cytoplasmic portion of the chain corresponds to 279–295; the sequence is RSPELRVAFKKMVICNW. Residue Cys-293 is the site of S-palmitoyl cysteine attachment.

It belongs to the G-protein coupled receptor 1 family. Homodimer. Interacts with corticotropin (ACTH). Interacts with MRAP; this interaction targets MC2R to the plasma membrane. Interacts with MRAP2; competing with MRAP for binding to MC2R and impairing the binding of corticotropin (ACTH). Post-translationally, ubiquitinated by MGRN1 that may be involved in post-endocytic trafficking and/or degradation of internalized receptor.

It is found in the cell membrane. Its function is as follows. Hormone receptor primarily expressed in adrenal cortex that plays a key role in regulating adrenocortical function. Upon corticotropin (ACTH) binding, facilitates the release of adrenal glucocorticoids, including cortisol and corticosterone. In addition, MC2R is required for fetal and neonatal adrenal gland development. Mechanistically, activates adenylate cyclase (cAMP), the MAPK cascade as well as the cAMP-dependent protein kinase A pathway leading to steroidogenic factor 1/NR5A1-mediated transcriptional activation. This chain is Adrenocorticotropic hormone receptor (MC2R), found in Ovis aries (Sheep).